A 332-amino-acid chain; its full sequence is Olfactory receptor 10G6 (332 aa).

The Extracellular segment spans residues 1–46; it reads MLEGVEHLLLLLLLTDVNSKELQSGNQTSVSHFILVGLHHPPQLGA. Asn-26 is a glycosylation site (N-linked (GlcNAc...) asparagine). The chain crosses the membrane as a helical span at residues 47-67; sequence PLFLAFLVIYLLTVSGNGLII. Topologically, residues 68 to 75 are cytoplasmic; sequence LTVLVDIR. A helical transmembrane segment spans residues 76-96; sequence LHRPMCLFLCHLSFLDMTISC. The Extracellular portion of the chain corresponds to 97-120; the sequence is AIVPKMLAGFLLGSRIISFGGCVI. Cys-118 and Cys-210 are disulfide-bonded. Residues 121-141 form a helical membrane-spanning segment; it reads QLFSFHFLGCTECFLYTLMAY. At 142–160 the chain is on the cytoplasmic side; the sequence is DRFLAICKPLHYATIMTHR. The helical transmembrane segment at 161–181 threads the bilayer; it reads VCNSLALGTWLGGTIHSLFQT. Residues 182–218 are Extracellular-facing; it reads SFVFRLPFCGPNRVDYIFCDIPAMLRLACADTAINEL. Residues 219–238 form a helical membrane-spanning segment; it reads VTFADIGFLALTCFMLILTS. Residues 239-258 are Cytoplasmic-facing; it reads YGYIVAAILRIPSADGRRNA. The helical transmembrane segment at 259–279 threads the bilayer; sequence FSTCAAHLTVVIVYYVPCTFI. The Extracellular portion of the chain corresponds to 280–290; the sequence is YLRPCSQEPLD. Residues 291–311 form a helical membrane-spanning segment; sequence GVVAVFYTVITPLLNSIIYTL. Residues 312–332 lie on the Cytoplasmic side of the membrane; it reads CNKEMKAALQRLGGHKEVQPH.

It belongs to the G-protein coupled receptor 1 family.

The protein localises to the cell membrane. Functionally, odorant receptor. The chain is Olfactory receptor 10G6 (OR10G6) from Homo sapiens (Human).